The sequence spans 418 residues: Glucose-1-phosphate adenylyltransferase (418 aa).

Residues Y107, G172, 187–188, and S205 each bind alpha-D-glucose 1-phosphate; that span reads EK.

Belongs to the bacterial/plant glucose-1-phosphate adenylyltransferase family. As to quaternary structure, homotetramer.

The enzyme catalyses alpha-D-glucose 1-phosphate + ATP + H(+) = ADP-alpha-D-glucose + diphosphate. It functions in the pathway glycan biosynthesis; glycogen biosynthesis. Its function is as follows. Involved in the biosynthesis of ADP-glucose, a building block required for the elongation reactions to produce glycogen. Catalyzes the reaction between ATP and alpha-D-glucose 1-phosphate (G1P) to produce pyrophosphate and ADP-Glc. This is Glucose-1-phosphate adenylyltransferase from Gemmatimonas aurantiaca (strain DSM 14586 / JCM 11422 / NBRC 100505 / T-27).